The chain runs to 513 residues: MNTVVVLDYGSQYTQLIVRRVREKGYYAELLPWDASKEEVQNLNPAAIILSGGPASVFEKDAPFVPDYILELNIPILGICYGLQSLVHKFGGIVEKSPKREFGHAVLKVKDDPLFEGLPKEFDVWMSHSDRVEKLPEGFLVIGESENSPYAAIRNKDGTIYGVQFHPEVTHTSFGDKILENFVSKVAKMEKNWKMTDFIEEKINEIRKVVGNDKVILGLSGGVDSSVVALLLDKAIGKNSIPIFVDTGLLRLNERQEVEENFRKLGIDIVVVDAKERFLSNLKGVEDPEEKRKIIGHTFIDVFYEASMKLLEKHGNIKYLAQGTLYPDIIESKVSERKAAAKIKTHHNVGGLPEKLPFKIIEPFRYLFKDEVRKIGKILGLPDEMINRHPFPGPGLAVRIIGEVTNEAIKILQHADHIFIEELKKNDLYDKVWQAFAVFLPIRSVGVMGDYRTYDNVIALRAVNSFDGMTADWSKLPHEFLNKVAKRIVNEVDGVNRVVYDITSKPPATIEWE.

The Glutamine amidotransferase type-1 domain maps to 3–192; sequence TVVVLDYGSQ…VSKVAKMEKN (190 aa). Cys-80 acts as the Nucleophile in catalysis. Catalysis depends on residues His-166 and Glu-168. The 196-residue stretch at 193-388 folds into the GMPS ATP-PPase domain; that stretch reads WKMTDFIEEK…LGLPDEMINR (196 aa). Residue 220–226 coordinates ATP; it reads SGGVDSS.

In terms of assembly, homodimer.

It carries out the reaction XMP + L-glutamine + ATP + H2O = GMP + L-glutamate + AMP + diphosphate + 2 H(+). Its pathway is purine metabolism; GMP biosynthesis; GMP from XMP (L-Gln route): step 1/1. Catalyzes the synthesis of GMP from XMP. The sequence is that of GMP synthase [glutamine-hydrolyzing] from Thermosipho africanus (strain TCF52B).